Consider the following 225-residue polypeptide: ATP synthase subunit a (225 aa).

The next 6 membrane-spanning stretches (helical) occupy residues 18-38, 73-93, 100-120, 126-146, 156-176, and 187-207; these read LSLN…MFWL, ILIS…FPYI, MTLT…FGWI, MFTH…MVLI, GTLA…LTLL, and IMLF…AVAM.

It belongs to the ATPase A chain family. As to quaternary structure, F-type ATPases have 2 components, CF(1) - the catalytic core - and CF(0) - the membrane proton channel. CF(1) has five subunits: alpha(3), beta(3), gamma(1), delta(1), epsilon(1). CF(0) has three main subunits: a, b and c.

Its subcellular location is the mitochondrion inner membrane. In terms of biological role, mitochondrial membrane ATP synthase (F(1)F(0) ATP synthase or Complex V) produces ATP from ADP in the presence of a proton gradient across the membrane which is generated by electron transport complexes of the respiratory chain. F-type ATPases consist of two structural domains, F(1) - containing the extramembraneous catalytic core and F(0) - containing the membrane proton channel, linked together by a central stalk and a peripheral stalk. During catalysis, ATP synthesis in the catalytic domain of F(1) is coupled via a rotary mechanism of the central stalk subunits to proton translocation. Key component of the proton channel; it may play a direct role in the translocation of protons across the membrane. In Locusta migratoria (Migratory locust), this protein is ATP synthase subunit a (ATP6).